Reading from the N-terminus, the 267-residue chain is Acetyl-coenzyme A carboxylase carboxyl transferase subunit beta 1 (267 aa).

In terms of domain architecture, CoA carboxyltransferase N-terminal spans 9 to 267 (TWQACPKCGR…NYGIGRSAHG (259 aa)). The Zn(2+) site is built by cysteine 13, cysteine 16, cysteine 31, and cysteine 34. A C4-type zinc finger spans residues 13–34 (CPKCGRHVHQRQWGTYQQCPYC).

The protein belongs to the AccD/PCCB family. In terms of assembly, acetyl-CoA carboxylase is a heterohexamer composed of biotin carboxyl carrier protein (AccB), biotin carboxylase (AccC) and two subunits each of ACCase subunit alpha (AccA) and ACCase subunit beta (AccD). The cofactor is Zn(2+).

It localises to the cytoplasm. It catalyses the reaction N(6)-carboxybiotinyl-L-lysyl-[protein] + acetyl-CoA = N(6)-biotinyl-L-lysyl-[protein] + malonyl-CoA. The protein operates within lipid metabolism; malonyl-CoA biosynthesis; malonyl-CoA from acetyl-CoA: step 1/1. Functionally, component of the acetyl coenzyme A carboxylase (ACC) complex. Biotin carboxylase (BC) catalyzes the carboxylation of biotin on its carrier protein (BCCP) and then the CO(2) group is transferred by the transcarboxylase to acetyl-CoA to form malonyl-CoA. The sequence is that of Acetyl-coenzyme A carboxylase carboxyl transferase subunit beta 1 from Lactiplantibacillus plantarum (strain ATCC BAA-793 / NCIMB 8826 / WCFS1) (Lactobacillus plantarum).